The following is a 451-amino-acid chain: UPF0210 protein NMA1908 (451 aa).

This sequence belongs to the UPF0210 family. Homodimer.

This is UPF0210 protein NMA1908 from Neisseria meningitidis serogroup A / serotype 4A (strain DSM 15465 / Z2491).